The chain runs to 377 residues: RCC1 domain-containing protein 1 (377 aa).

Residues methionine 1–histidine 172 form an interaction with KDM8 region. Residues histidine 6–arginine 57 form an RCC1 1 repeat. Arginine 144 is modified ((3R)-3-hydroxyarginine). RCC1 repeat units lie at residues alanine 179 to glutamate 230, glycine 232 to glutamine 289, and threonine 319 to methionine 372.

In terms of assembly, found in a complex with KDM8. Interacts (via N-terminus) with KDM8 (via N-terminus). Post-translationally, specifically hydroxylated (with R stereochemistry) at C-3 of ARG-141 by KDM8.

The protein resides in the chromosome. Its function is as follows. Plays a role in transcriptional repression of satellite repeats, possibly by regulating H3K36 methylation levels in centromeric regions together with KDM8. Possibly together with KDM8, is involved in proper mitotic spindle organization and chromosome segregation. Plays a role in regulating alpha-tubulin deacetylation and cytoskeletal microtubule stability, thereby promoting cell migration and TGF-beta-induced epithelial to mesenchymal transition (EMT), potentially through the inhibition of KDM8. This is RCC1 domain-containing protein 1 (Rccd1) from Mus musculus (Mouse).